The chain runs to 199 residues: VAMP-like protein YKT61 (199 aa).

The 127-residue stretch at 7–133 (LVLKCAPEAS…LTEALNKFQD (127 aa)) folds into the Longin domain. The region spanning 139–199 (KLLKIQRELD…KKTNSCCTIL (61 aa)) is the v-SNARE coiled-coil homology domain. Cys-195 carries S-palmitoyl cysteine lipidation. The residue at position 196 (Cys-196) is a Cysteine methyl ester. Cys-196 is lipidated: S-geranylgeranyl cysteine. Residues 197-199 (TIL) constitute a propeptide, removed in mature form.

It belongs to the synaptobrevin family. As to quaternary structure, interacts with SYP41. Core constituent of the SNARE complex required for membrane fusion at the trans-Golgi network. Expressed ubiquitously in roots, stems, flowers and leaves.

The protein localises to the cell membrane. Functionally, may be involved in the secretory pathway. Essential for membrane fusion mediated by either SYP41 or SYP61; triggers the fusion of phospholipid vesicles containing SYP41 or SYP61 and VTI12. This Arabidopsis thaliana (Mouse-ear cress) protein is VAMP-like protein YKT61.